A 122-amino-acid polypeptide reads, in one-letter code: Cytochrome c-556 (122 aa).

Residues Met-11, Cys-111, Cys-114, and His-115 each contribute to the heme site. Residues Met-11, Cys-111, Cys-114, and His-115 each contribute to the heme c site.

In terms of assembly, monomer. Binds 1 heme c group covalently per subunit.

Functionally, low-spin monoheme cytochrome c. This chain is Cytochrome c-556, found in Agrobacterium tumefaciens (strain B2A).